The chain runs to 71 residues: MGSFSMWHWLIVLAIVLLLFGRGKIPELMGDVAKGIKSFKKGMSDDDTAPDGTPKPADQSKTVDHRADDHK.

A helical transmembrane segment spans residues 1-21; it reads MGSFSMWHWLIVLAIVLLLFG. Residues 40-71 are disordered; sequence KKGMSDDDTAPDGTPKPADQSKTVDHRADDHK. Residues 61-71 are compositionally biased toward basic and acidic residues; it reads KTVDHRADDHK.

The protein belongs to the TatA/E family. The Tat system comprises two distinct complexes: a TatABC complex, containing multiple copies of TatA, TatB and TatC subunits, and a separate TatA complex, containing only TatA subunits. Substrates initially bind to the TatABC complex, which probably triggers association of the separate TatA complex to form the active translocon.

Its subcellular location is the cell inner membrane. Its function is as follows. Part of the twin-arginine translocation (Tat) system that transports large folded proteins containing a characteristic twin-arginine motif in their signal peptide across membranes. TatA could form the protein-conducting channel of the Tat system. This is Sec-independent protein translocase protein TatA from Allorhizobium ampelinum (strain ATCC BAA-846 / DSM 112012 / S4) (Agrobacterium vitis (strain S4)).